We begin with the raw amino-acid sequence, 399 residues long: Dual-specificity RNA methyltransferase RlmN (399 aa).

The active-site Proton acceptor is E122. Positions 128 to 371 constitute a Radical SAM core domain; the sequence is ETDRGTLCVS…VRTPRGRDIL (244 aa). Residues C135 and C374 are joined by a disulfide bond. Residues C142, C146, and C149 each coordinate [4Fe-4S] cluster. S-adenosyl-L-methionine contacts are provided by residues 200–201, S232, 254–256, and N331; these read GE and SLH. The S-methylcysteine intermediate role is filled by C374.

It belongs to the radical SAM superfamily. RlmN family. It depends on [4Fe-4S] cluster as a cofactor.

The protein localises to the cytoplasm. The catalysed reaction is adenosine(2503) in 23S rRNA + 2 reduced [2Fe-2S]-[ferredoxin] + 2 S-adenosyl-L-methionine = 2-methyladenosine(2503) in 23S rRNA + 5'-deoxyadenosine + L-methionine + 2 oxidized [2Fe-2S]-[ferredoxin] + S-adenosyl-L-homocysteine. It catalyses the reaction adenosine(37) in tRNA + 2 reduced [2Fe-2S]-[ferredoxin] + 2 S-adenosyl-L-methionine = 2-methyladenosine(37) in tRNA + 5'-deoxyadenosine + L-methionine + 2 oxidized [2Fe-2S]-[ferredoxin] + S-adenosyl-L-homocysteine. Specifically methylates position 2 of adenine 2503 in 23S rRNA and position 2 of adenine 37 in tRNAs. m2A2503 modification seems to play a crucial role in the proofreading step occurring at the peptidyl transferase center and thus would serve to optimize ribosomal fidelity. This chain is Dual-specificity RNA methyltransferase RlmN, found in Rhodopseudomonas palustris (strain ATCC BAA-98 / CGA009).